We begin with the raw amino-acid sequence, 496 residues long: MNRKRPLMVLGTSSGAGKSLMTAALCRVLHRRGEQPLPFKGQNMSNNAWVDADGGEMAYSQAMQAWAAGLEPCCAMNPVLLKPRGDSTSEVIHGGTSVGLARAEHYYRDWFRPGWQAIREGLQTMQQRWPNGRLVLEGAGSPVEVNLQRRDLTNLRLAQYLRANCLLVADIERGGVFAQIVGTLALLRPVERPLIKGILINRFRGRRELFDEGRSWLEQHTGVPVLGVMPWLNDLFPPEDSLDLLERKPNRGPTDLEIAVLKLPSISNFSDLDPLEAEPSLRLRWVHPGDSLGSPDAVLLPGSKQTLRDLETLRSSGLDRQLTAYATNGGSLLAICGGMQLLGQELHDPEQLEGGDGAGPWPGLGLLPLTTEFGGTKALRQREVQALWPGTTPISGFELHHGSTWASDDLQPICNEPGLGWWCATPAGGCIAGTYLHGLLDNGPWRRRWLNQLRERKGLAPLITGLPHHGEHRHQLLERLADAFEQHVDLTPLLQP.

Positions 255 to 445 (DLEIAVLKLP…LHGLLDNGPW (191 aa)) constitute a GATase cobBQ-type domain. Cysteine 336 functions as the Nucleophile in the catalytic mechanism. The active site involves histidine 437.

Belongs to the CobB/CobQ family. CobQ subfamily.

It participates in cofactor biosynthesis; adenosylcobalamin biosynthesis. Catalyzes amidations at positions B, D, E, and G on adenosylcobyrinic A,C-diamide. NH(2) groups are provided by glutamine, and one molecule of ATP is hydrogenolyzed for each amidation. The polypeptide is Cobyric acid synthase (Parasynechococcus marenigrum (strain WH8102)).